The primary structure comprises 867 residues: Retinoblastoma-related protein 1 (867 aa).

Residues 275–476 (TPVTSAMTTA…EKGSSLYNSL (202 aa)) are domain A. Positions 275–722 (TPVTSAMTTA…NEVFVPAAKP (448 aa)) are pocket; binds RPD3I and RBAP1. The segment at 477-594 (IVARPSVASE…PVGGNEKCAD (118 aa)) is spacer. A disordered region spans residues 512-563 (EGLPATPSKKRAAGPDDNADPRSPKRSCNESRNTVVERNLQTPPPKQSHMVS). The segment covering 530–540 (ADPRSPKRSCN) has biased composition (basic and acidic residues). Residues 541–552 (ESRNTVVERNLQ) are compositionally biased toward polar residues. The tract at residues 595-722 (VTIHIFFSKI…NEVFVPAAKP (128 aa)) is domain B. Disordered stretches follow at residues 734–762 (PEDK…MSPK) and 843–867 (QING…ETDT).

Belongs to the retinoblastoma protein (RB) family. Interacts with RPD3I, RBAP1, the Arabidopsis cyclin CYCD3-1, the mastrevirus replication-associated protein A (RepA) and the begomovirus replication-associated protein (Rep). Ubiquitous.

Its subcellular location is the nucleus. Its function is as follows. Regulator of biological processes that recruits a histone deacetylase to control gene transcription. May play a role in the entry into mitosis, negatively regulating the cell proliferation. Formation of stable complexes with geminiviridae replication-associated proteins may create a cellular environment which favors viral DNA replication. The chain is Retinoblastoma-related protein 1 (RBR1) from Zea mays (Maize).